Consider the following 101-residue polypeptide: Large ribosomal subunit protein bL21 (101 aa).

The protein belongs to the bacterial ribosomal protein bL21 family. In terms of assembly, part of the 50S ribosomal subunit. Contacts protein L20.

In terms of biological role, this protein binds to 23S rRNA in the presence of protein L20. The chain is Large ribosomal subunit protein bL21 from Anaeromyxobacter dehalogenans (strain 2CP-1 / ATCC BAA-258).